A 136-amino-acid chain; its full sequence is Large ribosomal subunit protein uL16 (136 aa).

The protein belongs to the universal ribosomal protein uL16 family. As to quaternary structure, part of the 50S ribosomal subunit.

Its function is as follows. Binds 23S rRNA and is also seen to make contacts with the A and possibly P site tRNAs. The polypeptide is Large ribosomal subunit protein uL16 (Pectobacterium atrosepticum (strain SCRI 1043 / ATCC BAA-672) (Erwinia carotovora subsp. atroseptica)).